A 485-amino-acid polypeptide reads, in one-letter code: Adenosylhomocysteinase (485 aa).

Substrate contacts are provided by Thr-64, Asp-139, and Glu-205. Position 206–208 (206–208 (TTT)) interacts with NAD(+). Positions 235 and 239 each coordinate substrate. Residues Asn-240, 269–274 (GYGDVG), Glu-292, Asn-327, 348–350 (IGH), and Asn-397 each bind NAD(+).

This sequence belongs to the adenosylhomocysteinase family. NAD(+) is required as a cofactor.

It catalyses the reaction S-adenosyl-L-homocysteine + H2O = L-homocysteine + adenosine. It functions in the pathway amino-acid biosynthesis; L-homocysteine biosynthesis; L-homocysteine from S-adenosyl-L-homocysteine: step 1/1. Its function is as follows. Adenosylhomocysteine is a competitive inhibitor of S-adenosyl-L-methionine-dependent methyl transferase reactions; therefore adenosylhomocysteinase may play a key role in the control of methylations via regulation of the intracellular concentration of adenosylhomocysteine. This Solanum lycopersicum (Tomato) protein is Adenosylhomocysteinase (SAHH).